We begin with the raw amino-acid sequence, 246 residues long: Phosphomannomutase (246 aa).

Asp13 acts as the Nucleophile in catalysis. Mg(2+) contacts are provided by Asp13 and Asp15. The Proton donor/acceptor role is filled by Asp15. 6 residues coordinate alpha-D-mannose 1-phosphate: Arg22, Arg124, Arg135, Arg142, Ser180, and Asp182. Mg(2+) is bound by residues Asp208, Tyr220, and Thr225.

The protein belongs to the eukaryotic PMM family. As to quaternary structure, homodimer. Mg(2+) is required as a cofactor. Expressed in roots, stems, leaves, flowers and immature fruits.

Its subcellular location is the cytoplasm. It carries out the reaction alpha-D-mannose 1-phosphate = D-mannose 6-phosphate. It functions in the pathway nucleotide-sugar biosynthesis; GDP-alpha-D-mannose biosynthesis; alpha-D-mannose 1-phosphate from D-fructose 6-phosphate: step 2/2. Functionally, catalyzes the interconversion of mannose-6-phosphate to mannose-1-phosphate, the precursor for the synthesis of GDP-mannose. GDP-mannose is an essential sugar nucleotide for the synthesis of D-mannose-containing cell wall polysaccharides (galactomannans and glucomannans), glycolipids, glycoproteins and the antioxidant L-ascorbate. Can complement the yeast temperature-sensitive mutant sec53-6. In Arabidopsis thaliana (Mouse-ear cress), this protein is Phosphomannomutase.